We begin with the raw amino-acid sequence, 204 residues long: MITTSLRRRTAAAVLSLSAVLATTAATAPGAAPAPSAAPAKAAPACPQFDDRTKAAADRGVDVDRITPEPVWRTTCGTLYRSDSRGPQVVFEEGFHAKDVQNGQYDVEKYVLVNQPSPYVSTSYDHDLYKTWYKSGYNYYVDAPGGIDVNKTIGDTHKWADQVEVAFPGGIQRKYIIGVCPVDRQTKTEIMSDCESNPHYQPWH.

A signal peptide spans 1–42 (MITTSLRRRTAAAVLSLSAVLATTAATAPGAAPAPSAAPAKA). A disulfide bridge links Cys46 with Cys76. Residues 81 to 85 (RSDSR) and Lys98 each bind NADH. GDP is bound by residues 111 to 114 (VLVN), 132 to 134 (WYK), Trp159, and Gln162. The PN (phosphate-nicotinamide) loop signature appears at 132–136 (WYKSG). The cysteines at positions 180 and 194 are disulfide-linked.

The protein belongs to the pierisin ADP-ribosyltransferase family. In terms of assembly, monomer.

The protein resides in the secreted. It carries out the reaction guanosine + NAD(+) = N(2)-(ADP-D-ribosyl)-guanosine + nicotinamide + H(+). It catalyses the reaction a 2'-deoxyguanosine in DNA + NAD(+) = an N(2)-(ADP-L-ribosyl)-2'-deoxyguanosine in DNA + nicotinamide + H(+). The enzyme catalyses 2'-deoxyguanosine + NAD(+) = N(2)-(ADP-D-ribosyl)-2'-deoxyguanosine + nicotinamide + H(+). The catalysed reaction is GMP + NAD(+) = N(2)-(ADP-D-ribosyl)-GMP + nicotinamide + H(+). It carries out the reaction GTP + NAD(+) = N(2)-(ADP-D-ribosyl)-GTP + nicotinamide + H(+). It catalyses the reaction dGMP + NAD(+) = N(2)-(ADP-D-ribosyl)-dGMP + nicotinamide + H(+). The enzyme catalyses dGTP + NAD(+) = N(2)-(ADP-D-ribosyl)-dGTP + nicotinamide + H(+). The catalysed reaction is 3',5'-cyclic GMP + NAD(+) = N(2)-(ADP-D-ribosyl)-3',5'-cyclic GMP + nicotinamide + H(+). It carries out the reaction guanine + NAD(+) = N(2)-(ADP-D-ribosyl)-guanine + nicotinamide + H(+). It catalyses the reaction GDP + NAD(+) = N(2)-(ADP-D-ribosyl)-GDP + nicotinamide + H(+). Inhibited by NADH. In terms of biological role, ADP-ribosylates the N2 amino group of guanosine, deoxyguanosine, GMP, dGMP, cGMP, GTP and dGTP; oligo-guanosine, oligo-deoxyguanosine and tRNA are ADP-ribosylated less efficiently, while dsDNA is a very poor substrate. Also acts on GDP. The polypeptide is Guanine-specific ADP-ribosyl transferase (Streptomyces coelicolor (strain ATCC BAA-471 / A3(2) / M145)).